The chain runs to 288 residues: Diaminopimelate epimerase (288 aa).

The substrate site is built by Asn13, Gln46, and Asn66. The active-site Proton donor is the Cys75. Substrate contacts are provided by residues 76–77, Asn166, Asn199, and 217–218; these read GN and ER. Cys226 functions as the Proton acceptor in the catalytic mechanism. 227 to 228 contacts substrate; it reads GT.

The protein belongs to the diaminopimelate epimerase family. In terms of assembly, homodimer.

The protein resides in the cytoplasm. The enzyme catalyses (2S,6S)-2,6-diaminopimelate = meso-2,6-diaminopimelate. Its pathway is amino-acid biosynthesis; L-lysine biosynthesis via DAP pathway; DL-2,6-diaminopimelate from LL-2,6-diaminopimelate: step 1/1. In terms of biological role, catalyzes the stereoinversion of LL-2,6-diaminopimelate (L,L-DAP) to meso-diaminopimelate (meso-DAP), a precursor of L-lysine and an essential component of the bacterial peptidoglycan. The sequence is that of Diaminopimelate epimerase from Cupriavidus taiwanensis (strain DSM 17343 / BCRC 17206 / CCUG 44338 / CIP 107171 / LMG 19424 / R1) (Ralstonia taiwanensis (strain LMG 19424)).